A 679-amino-acid polypeptide reads, in one-letter code: MGIRGLMSFVEDHSNEFFTDLKLRDTKIVIDGYALFHRLCFSSNLDLRYGGDYDSFADVVQKFFESLFACNICPYVVLDGGCDISDKKLTTLKDRAREKIQMAHSLSVGGSGYVCPLLIREVFIQVLIKLRVCFVQCFSEADRDIMTLANHWNCPVLSSDSDFCIFDLKTGFCPLNSFQWRNMNTIKGTQNYIPAKCFSLDAFCHHFSNMNKALLPLFAVLCGNDHVNLPIMETFLSKARLPLGATSSKGRRHHRILGLLNWLSHFANPTEALDNVLKYLPKKDRENVKELLCCSMEEYQQSQVKLQDFFQCGTYVCPDALNLGLPEWVLVALAKGQLSPFISDALVLRRTILPTQVENMQQPNAHRISQPIRQIIYGLLLNASPHLDKTSWNALPPQPLAFSEVERINKNIRTSIIDAVELAKDHSDLSRLTELSLRRRQMLLLETLKVKQTILEPIPTSLKLPIAVSCYWLQHTETKAKLHHLQSLLLTMLVGPLIAIINSPGKEELQEDGAKMLYAEFQRVKAQTRLGTRLDLDTAHIFCQWQSCLQMGMYLNQLLSTPLPEPDLTRLYSGSLVHGLCQQLLASTSVESLLSICPEAKQLYEYLFNATRSYAPAEIFLPKGRSNSKKKRQKKQNTSCSKNRGRTTAHTKCWYEGNNRFGLLMVENLEEHSEASNIE.

Residues 351–400 form an interaction with SHLD2 region; it reads TILPTQVENMQQPNAHRISQPIRQIIYGLLLNASPHLDKTSWNALPPQPL. Positions 625–645 are disordered; it reads RSNSKKKRQKKQNTSCSKNRG. The segment covering 626–635 has biased composition (basic residues); that stretch reads SNSKKKRQKK.

It belongs to the asteroid family. As to quaternary structure, interacts with SHLD1, SHLD2, SHLD3, RIF1 and MAD2L2/REV7.

Structure-specific DNA endonuclease that specifically cleaves single-stranded DNA and 3' overhang DNA. Contributes to the control of DNA double-strand break repair choice by antagonizing BRCA1-dependent homologous recombination (HR) and promoting non-homologous end-joining (NHEJ). Recruited to the single-stranded DNA ends by SHLD2 and cleaves the 3' exposed DNA ends, therefore inhibiting DNA end resection (necessary for HR) and promoting DNA end protection (necessary for NHEJ). The polypeptide is Single-strand DNA endonuclease ASTE1 (ASTE1) (Homo sapiens (Human)).